The following is a 465-amino-acid chain: Argininosuccinate lyase (465 aa).

This sequence belongs to the lyase 1 family. Argininosuccinate lyase subfamily.

Its subcellular location is the cytoplasm. It carries out the reaction 2-(N(omega)-L-arginino)succinate = fumarate + L-arginine. Its pathway is amino-acid biosynthesis; L-arginine biosynthesis; L-arginine from L-ornithine and carbamoyl phosphate: step 3/3. This chain is Argininosuccinate lyase, found in Nitrobacter winogradskyi (strain ATCC 25391 / DSM 10237 / CIP 104748 / NCIMB 11846 / Nb-255).